We begin with the raw amino-acid sequence, 574 residues long: Sulfate adenylyltransferase (574 aa).

The segment at 1 to 169 (MANTPHGGVL…IEAVNKLNHY (169 aa)) is N-terminal. The segment at 170 to 394 (DYVALRYTPA…LRESNPPRAS (225 aa)) is catalytic. Gln197 is a sulfate binding site. Residues 197 to 200 (QTRN) and 291 to 294 (GRDH) contribute to the ATP site. Catalysis depends on residues Thr198, Arg199, and Asn200. A sulfate-binding site is contributed by Arg199. Position 295 (Ala295) interacts with sulfate. Residue Val333 participates in ATP binding. Residues 395–574 (QGFTIFLTGY…LESEGYFERL (180 aa)) form an allosteric regulation domain; adenylyl-sulfate kinase-like region. Residues 434 to 437 (DTVR), Arg451, 477 to 478 (IA), and Arg516 contribute to the 3'-phosphoadenylyl sulfate site.

This sequence in the N-terminal section; belongs to the sulfate adenylyltransferase family. In the C-terminal section; belongs to the APS kinase family. Homohexamer. Dimer of trimers.

The protein localises to the cytoplasm. It catalyses the reaction sulfate + ATP + H(+) = adenosine 5'-phosphosulfate + diphosphate. It participates in sulfur metabolism; hydrogen sulfide biosynthesis; sulfite from sulfate: step 1/3. Its activity is regulated as follows. Allosterically inhibited by 3'-phosphoadenosine 5'-phosphosulfate (PAPS). In terms of biological role, catalyzes the first intracellular reaction of sulfate assimilation, forming adenosine-5'-phosphosulfate (APS) from inorganic sulfate and ATP. Plays an important role in sulfate activation as a component of the biosynthesis pathway of sulfur-containing amino acids. The protein is Sulfate adenylyltransferase of Aspergillus niger.